A 515-amino-acid polypeptide reads, in one-letter code: Maturase K (515 aa).

This sequence belongs to the intron maturase 2 family. MatK subfamily.

Its subcellular location is the plastid. It localises to the chloroplast. Its function is as follows. Usually encoded in the trnK tRNA gene intron. Probably assists in splicing its own and other chloroplast group II introns. The sequence is that of Maturase K from Pinus roxburghii (Chir pine).